The primary structure comprises 458 residues: GTPase Obg (458 aa).

The 157-residue stretch at Met1–Leu157 folds into the Obg domain. In terms of domain architecture, OBG-type G spans Ala158–Ser326. GTP is bound by residues Gly164–Ser171, Phe189–Asn193, Asp210–Gly213, Asn280–Asp283, and Ser307–Ala309. Mg(2+)-binding residues include Ser171 and Thr191. The OCT domain maps to Ala341 to Gly419. Positions Thr420–Lys458 are disordered. Basic and acidic residues predominate over residues Asp423–Glu446. The span at Lys447 to Lys458 shows a compositional bias: basic residues.

Belongs to the TRAFAC class OBG-HflX-like GTPase superfamily. OBG GTPase family. Monomer. The cofactor is Mg(2+).

The protein resides in the cytoplasm. Functionally, an essential GTPase which binds GTP, GDP and possibly (p)ppGpp with moderate affinity, with high nucleotide exchange rates and a fairly low GTP hydrolysis rate. Plays a role in control of the cell cycle, stress response, ribosome biogenesis and in those bacteria that undergo differentiation, in morphogenesis control. The polypeptide is GTPase Obg (Elusimicrobium minutum (strain Pei191)).